Consider the following 652-residue polypeptide: Serine/threonine-protein kinase ssp1 (652 aa).

Residue Tyr58 is modified to Phosphotyrosine. Phosphoserine is present on Ser59. Phosphotyrosine is present on Tyr63. One can recognise a Protein kinase domain in the interval 135-409; it reads YEIIKELGRG…LVEVKLHPWT (275 aa). ATP contacts are provided by residues 141–149 and Lys164; that span reads LGRGMHGKV. Asp267 acts as the Proton acceptor in catalysis. Disordered regions lie at residues 467-491 and 506-529; these read DSSS…SIGL and NESQ…SSEK. Basic and acidic residues predominate over residues 508–518; that stretch reads SQKDRERKQVH.

This sequence belongs to the protein kinase superfamily. Ser/Thr protein kinase family.

The protein resides in the cytoplasm. The catalysed reaction is L-seryl-[protein] + ATP = O-phospho-L-seryl-[protein] + ADP + H(+). The enzyme catalyses L-threonyl-[protein] + ATP = O-phospho-L-threonyl-[protein] + ADP + H(+). In terms of biological role, involved in actin localization and thus in polarized cell growth. The chain is Serine/threonine-protein kinase ssp1 (ssp1) from Schizosaccharomyces pombe (strain 972 / ATCC 24843) (Fission yeast).